Here is a 283-residue protein sequence, read N- to C-terminus: Elongation factor Ts (283 aa).

Residues 79-82 (TDFV) form an involved in Mg(2+) ion dislocation from EF-Tu region.

This sequence belongs to the EF-Ts family.

It is found in the cytoplasm. Functionally, associates with the EF-Tu.GDP complex and induces the exchange of GDP to GTP. It remains bound to the aminoacyl-tRNA.EF-Tu.GTP complex up to the GTP hydrolysis stage on the ribosome. This Shewanella oneidensis (strain ATCC 700550 / JCM 31522 / CIP 106686 / LMG 19005 / NCIMB 14063 / MR-1) protein is Elongation factor Ts.